Reading from the N-terminus, the 400-residue chain is MSTNQQQQANPSAAVAAPAASSEYLKRTCLICGCHTNQTINIYEPRSGPNIVQLIQAKFKFQPLNEDKFLCFSCNNWLINWHSLQAVNSNEAESQSQSPSHMGNSVLQQERTKLRPVAMVRPTVRVQPQSQPQLQPQVPINPTPAPIVYSKRRASRRSASVSRMSRVLRQCCVESLRRSPKKRNQQSVFVCLRPQGQKRSNAICKVECVAPRRKPVERLVKDVAATATPTPVLNTQSTPTYQRFPQPSVDGKVVAMFRRLGTTLSREEPAAYSAESNPACSKLPQIMSPLKEAPRWTRDLDDDEILLEFDTAISEVLPTARYQVTHEENKENQQAQEMELELEEEEEVDGRAELEVVQEAEAPLEPQSHHKQGNSHQNSHQASIQLAGLRLPMGLSISLV.

The interval 109 to 127 is interaction with sina; the sequence is QERTKLRPVAMVRPTVRVQ. A disordered region spans residues 125 to 145; the sequence is RVQPQSQPQLQPQVPINPTPA. A compositionally biased stretch (low complexity) spans 127-138; it reads QPQSQPQLQPQV. An interaction with ttk region spans residues 241–320; it reads YQRFPQPSVD…TAISEVLPTA (80 aa). The stretch at 319 to 362 forms a coiled coil; sequence TARYQVTHEENKENQQAQEMELELEEEEEVDGRAELEVVQEAEA. The disordered stretch occupies residues 346–382; it reads EEVDGRAELEVVQEAEAPLEPQSHHKQGNSHQNSHQA.

As to quaternary structure, component of some E3 complex at least composed of sina, ebi and phyl, required for the degradation of ttk. In embryos, it is ubiquitously present before cellularization. During stages 9-11, it is expressed in neuroblasts and the SOP cells. From stage 12 onward, it decreases, but remains in a subset of PNS cells at stages 12-14. Weakly expressed in wing imaginal disks, in the SOP cells of wing margin bristles, notal macrochaetes, and other sensory organs. In leg disks, it is expressed in the precursors of the femoral chordotonal organs, as well as in external sensory SOP cells. Strongly expressed in the eye-antenna disk, it is specifically expressed in R1, R6 and R7 cells, and not in R3, R3, R4, R5 and R8 cells.

The protein localises to the nucleus. Essential adapter component of E3 ubiquitin ligase complexes; involved in R7 photoreceptor cell differentiation, embryonic nervous system, external sensory organ development and specification of particular muscles. E3 ubiquitin ligase complexes mediate ubiquitination and subsequent proteasomal degradation of target proteins. Required for specification of R7 photoreceptor cell fate in the eye by participating in the ubiquitination and subsequent proteasomal degradation of Tramtrack (ttk), a general inhibitor of photoreceptor differentiation. Acts downstream of Notch signaling to specify the fate of the SOP (sensory organ precursor) cells and their progeny, probably via the sina-mediated proteasomal degradation of ttk. Its restricted pattern of expression, upon Notch and Ras signaling pathways, suggests that it acts as a key determinant in E3 complexes to trigger protein proteolysis in appropriate cells. The sequence is that of Protein phyllopod (phyl) from Drosophila melanogaster (Fruit fly).